The chain runs to 278 residues: 4-diphosphocytidyl-2-C-methyl-D-erythritol kinase (278 aa).

Lys10 is an active-site residue. ATP is bound at residue 93-103; it reads PMGGGLGGGSS. Asp135 is an active-site residue.

It belongs to the GHMP kinase family. IspE subfamily.

The enzyme catalyses 4-CDP-2-C-methyl-D-erythritol + ATP = 4-CDP-2-C-methyl-D-erythritol 2-phosphate + ADP + H(+). Its pathway is isoprenoid biosynthesis; isopentenyl diphosphate biosynthesis via DXP pathway; isopentenyl diphosphate from 1-deoxy-D-xylulose 5-phosphate: step 3/6. Functionally, catalyzes the phosphorylation of the position 2 hydroxy group of 4-diphosphocytidyl-2C-methyl-D-erythritol. In Thiobacillus denitrificans (strain ATCC 25259 / T1), this protein is 4-diphosphocytidyl-2-C-methyl-D-erythritol kinase.